The following is a 376-amino-acid chain: Anhydro-N-acetylmuramic acid kinase (376 aa).

22 to 29 (GTSMDGAD) serves as a coordination point for ATP.

This sequence belongs to the anhydro-N-acetylmuramic acid kinase family.

It carries out the reaction 1,6-anhydro-N-acetyl-beta-muramate + ATP + H2O = N-acetyl-D-muramate 6-phosphate + ADP + H(+). Its pathway is amino-sugar metabolism; 1,6-anhydro-N-acetylmuramate degradation. It functions in the pathway cell wall biogenesis; peptidoglycan recycling. Its function is as follows. Catalyzes the specific phosphorylation of 1,6-anhydro-N-acetylmuramic acid (anhMurNAc) with the simultaneous cleavage of the 1,6-anhydro ring, generating MurNAc-6-P. Is required for the utilization of anhMurNAc either imported from the medium or derived from its own cell wall murein, and thus plays a role in cell wall recycling. This chain is Anhydro-N-acetylmuramic acid kinase, found in Neisseria gonorrhoeae (strain NCCP11945).